The primary structure comprises 189 residues: MSKKHMKGNGGEVPENSEMSGSEELVAVEPGEPDYRELLARKEEELKQSQDRLLRMAAELDNTRKRLEREKSEGIAYANEGLMKDLLPVLDNLERALEHSENEADCGSLVEGVRMTLKGFLDSLARFGCTPFESVGNAFDPNFHEAVMQEEVADYPERTVIREFQKGYTLKERLLRPAMVVVSKAAGDT.

Positions 1–31 are disordered; it reads MSKKHMKGNGGEVPENSEMSGSEELVAVEPG.

It belongs to the GrpE family. Homodimer.

The protein resides in the cytoplasm. Functionally, participates actively in the response to hyperosmotic and heat shock by preventing the aggregation of stress-denatured proteins, in association with DnaK and GrpE. It is the nucleotide exchange factor for DnaK and may function as a thermosensor. Unfolded proteins bind initially to DnaJ; upon interaction with the DnaJ-bound protein, DnaK hydrolyzes its bound ATP, resulting in the formation of a stable complex. GrpE releases ADP from DnaK; ATP binding to DnaK triggers the release of the substrate protein, thus completing the reaction cycle. Several rounds of ATP-dependent interactions between DnaJ, DnaK and GrpE are required for fully efficient folding. The sequence is that of Protein GrpE from Syntrophobacter fumaroxidans (strain DSM 10017 / MPOB).